Reading from the N-terminus, the 131-residue chain is Profilin (131 aa).

This sequence belongs to the profilin family. Occurs in many kinds of cells as a complex with monomeric actin in a 1:1 ratio.

The protein localises to the cytoplasm. Its subcellular location is the cytoskeleton. Its function is as follows. Binds to actin and affects the structure of the cytoskeleton. At high concentrations, profilin prevents the polymerization of actin, whereas it enhances it at low concentrations. By binding to PIP2, it inhibits the formation of IP3 and DG. This chain is Profilin, found in Prunus avium (Cherry).